Here is a 360-residue protein sequence, read N- to C-terminus: Phospho-N-acetylmuramoyl-pentapeptide-transferase (360 aa).

Transmembrane regions (helical) follow at residues 25 to 45 (RGIL…PWMI), 73 to 93 (TMGG…WADL), 97 to 117 (YVWV…VDDY), 132 to 152 (WKYF…YMTA), 168 to 188 (VSIP…VGSS), 199 to 219 (GLAI…CYLS), 236 to 256 (AGEL…FLWF), 263 to 283 (VFMG…IAVI), 288 to 308 (VVLF…IIQV), and 338 to 358 (VIVR…ATLK).

This sequence belongs to the glycosyltransferase 4 family. MraY subfamily. Mg(2+) is required as a cofactor.

The protein resides in the cell inner membrane. It catalyses the reaction UDP-N-acetyl-alpha-D-muramoyl-L-alanyl-gamma-D-glutamyl-meso-2,6-diaminopimeloyl-D-alanyl-D-alanine + di-trans,octa-cis-undecaprenyl phosphate = di-trans,octa-cis-undecaprenyl diphospho-N-acetyl-alpha-D-muramoyl-L-alanyl-D-glutamyl-meso-2,6-diaminopimeloyl-D-alanyl-D-alanine + UMP. The protein operates within cell wall biogenesis; peptidoglycan biosynthesis. Functionally, catalyzes the initial step of the lipid cycle reactions in the biosynthesis of the cell wall peptidoglycan: transfers peptidoglycan precursor phospho-MurNAc-pentapeptide from UDP-MurNAc-pentapeptide onto the lipid carrier undecaprenyl phosphate, yielding undecaprenyl-pyrophosphoryl-MurNAc-pentapeptide, known as lipid I. This is Phospho-N-acetylmuramoyl-pentapeptide-transferase from Ectopseudomonas mendocina (strain ymp) (Pseudomonas mendocina).